A 339-amino-acid polypeptide reads, in one-letter code: Leucine-rich repeat-containing protein 75A (339 aa).

Residues 1-25 form a disordered region; sequence MGTRQTKGSLAERASPGAAPGPRRE. The span at 11–21 shows a compositional bias: low complexity; that stretch reads AERASPGAAPG. LRR repeat units lie at residues 203–216 and 228–241; these read VDSVELGFTGLTDD and LPRLTTLALNGNRL. Residues 294 to 339 are disordered; sequence LPTILELGEGPGTGEEAREGTDQQDPIGSPVTPARGQESTECVIQT. Position 322 is a phosphoserine (serine 322). Position 325 is a phosphothreonine (threonine 325). Polar residues predominate over residues 330-339; the sequence is QESTECVIQT.

Belongs to the LRRC75 family.

The sequence is that of Leucine-rich repeat-containing protein 75A (Lrrc75a) from Mus musculus (Mouse).